A 94-amino-acid chain; its full sequence is Small ribosomal subunit protein uS19 (94 aa).

The protein belongs to the universal ribosomal protein uS19 family.

In terms of biological role, protein S19 forms a complex with S13 that binds strongly to the 16S ribosomal RNA. This Dictyoglomus thermophilum (strain ATCC 35947 / DSM 3960 / H-6-12) protein is Small ribosomal subunit protein uS19.